Reading from the N-terminus, the 742-residue chain is Conserved oligomeric Golgi complex subunit 6 (742 aa).

Residues 692-742 (VGEDWELEEDTEEKSMKQKEQQDEDTEDQGEKGIMQEEHKAQDAGNTEDKA) are disordered. The span at 694-703 (EDWELEEDTE) shows a compositional bias: acidic residues. Residues 720-742 (QGEKGIMQEEHKAQDAGNTEDKA) show a composition bias toward basic and acidic residues.

It belongs to the COG6 family.

Its subcellular location is the golgi apparatus membrane. Functionally, acts as a component of the peripheral membrane COG complex that is involved in intra-Golgi protein trafficking. COG is located at the cis-Golgi, and regulates tethering of retrograde intra-Golgi vesicles and possibly a number of other membrane trafficking events. This chain is Conserved oligomeric Golgi complex subunit 6 (COG6), found in Cryptococcus neoformans var. neoformans serotype D (strain JEC21 / ATCC MYA-565) (Filobasidiella neoformans).